Here is a 311-residue protein sequence, read N- to C-terminus: 1,4-dihydroxy-2-naphthoate octaprenyltransferase (311 aa).

The next 9 membrane-spanning stretches (helical) occupy residues leucine 31 to valine 51, leucine 53 to phenylalanine 73, threonine 104 to serine 126, leucine 131 to alanine 153, phenylalanine 157 to isoleucine 177, isoleucine 182 to leucine 202, leucine 220 to alanine 240, isoleucine 242 to leucine 262, and threonine 290 to phenylalanine 310.

It belongs to the MenA family. Type 1 subfamily.

It is found in the cell membrane. It catalyses the reaction an all-trans-polyprenyl diphosphate + 1,4-dihydroxy-2-naphthoate + H(+) = a 2-demethylmenaquinol + CO2 + diphosphate. Its pathway is quinol/quinone metabolism; menaquinone biosynthesis; menaquinol from 1,4-dihydroxy-2-naphthoate: step 1/2. In terms of biological role, conversion of 1,4-dihydroxy-2-naphthoate (DHNA) to demethylmenaquinone (DMK). In Bacillus subtilis (strain 168), this protein is 1,4-dihydroxy-2-naphthoate octaprenyltransferase.